Reading from the N-terminus, the 205-residue chain is Arginine exporter protein ArgO (205 aa).

6 consecutive transmembrane segments (helical) span residues 1 to 21 (MLAV…PLGP), 37 to 57 (LMVA…GIFG), 68 to 88 (LLAL…WGAF), 112 to 132 (VVTM…TFVV), 147 to 167 (WFAL…ALLA), and 182 to 202 (IINT…AWQG).

This sequence belongs to the LysE/ArgO transporter (TC 2.A.75) family.

It is found in the cell inner membrane. It carries out the reaction L-arginine(in) = L-arginine(out). Functionally, involved in the export of arginine. Important to control the intracellular level of arginine and the correct balance between arginine and lysine. The chain is Arginine exporter protein ArgO from Serratia proteamaculans (strain 568).